Here is a 251-residue protein sequence, read N- to C-terminus: MSEGESKSTHFGYKTVEADKKAELVAGVFHSVAAKYDIMNDVMSFGIHRFWKRYTIEVSGARPGMKVLDLAGGTGDLTAKFSHLVGDKGEVVLADINDSMLKVGRTKLRDKGIVNNVSYVQANAEALPFPDNHFDIITIAFGLRNVTDKDAALRSMNRVLKPGGKLLVLEFSKPQHEIMRKVYDLYSFKVLPKMGELITKDADSYEYLAESIRMHPDQDTLKQMMVDAGFEQVDYTNMTDGIVALHRGYKF.

S-adenosyl-L-methionine is bound by residues Thr74, Asp95, and 123–124; that span reads NA.

It belongs to the class I-like SAM-binding methyltransferase superfamily. MenG/UbiE family.

It carries out the reaction a 2-demethylmenaquinol + S-adenosyl-L-methionine = a menaquinol + S-adenosyl-L-homocysteine + H(+). The catalysed reaction is a 2-methoxy-6-(all-trans-polyprenyl)benzene-1,4-diol + S-adenosyl-L-methionine = a 5-methoxy-2-methyl-3-(all-trans-polyprenyl)benzene-1,4-diol + S-adenosyl-L-homocysteine + H(+). The protein operates within quinol/quinone metabolism; menaquinone biosynthesis; menaquinol from 1,4-dihydroxy-2-naphthoate: step 2/2. Its pathway is cofactor biosynthesis; ubiquinone biosynthesis. Methyltransferase required for the conversion of demethylmenaquinol (DMKH2) to menaquinol (MKH2) and the conversion of 2-polyprenyl-6-methoxy-1,4-benzoquinol (DDMQH2) to 2-polyprenyl-3-methyl-6-methoxy-1,4-benzoquinol (DMQH2). The chain is Ubiquinone/menaquinone biosynthesis C-methyltransferase UbiE from Shewanella baltica (strain OS155 / ATCC BAA-1091).